A 238-amino-acid chain; its full sequence is MAGHSKWANTKHRKERADHKKGKIFSRTIKELISAVKMGGPDPKSNARLRMIIQKAKDQNIPNENIERNLKKASSADQKNYEEVTYELYGFGGVGIIVEAMTDNKNRTASDMRVAVNKRGGALVEPGSVLYNFSRKGACYVPKHSIDEASLLTHVIDCGGEDLDSDDEEFFLVLCEPTDLASVKEALLAKGVTCSEERLIYVPLRLVDCDEETGKSNLALIEWLENIDDVDDVYHNMA.

Positions 1 to 21 are disordered; sequence MAGHSKWANTKHRKERADHKK. The segment covering 9–21 has biased composition (basic residues); the sequence is NTKHRKERADHKK.

This sequence belongs to the TACO1 family.

It is found in the cytoplasm. The protein is Probable transcriptional regulatory protein CTA_0499 of Chlamydia trachomatis serovar A (strain ATCC VR-571B / DSM 19440 / HAR-13).